The chain runs to 128 residues: Small ribosomal subunit protein eS8 (128 aa).

This sequence belongs to the eukaryotic ribosomal protein eS8 family. In terms of assembly, part of the 30S ribosomal subunit.

This Methanococcus maripaludis (strain DSM 14266 / JCM 13030 / NBRC 101832 / S2 / LL) protein is Small ribosomal subunit protein eS8.